The following is a 339-amino-acid chain: Phenylalanine--tRNA ligase alpha subunit (339 aa).

Glu254 contributes to the Mg(2+) binding site.

This sequence belongs to the class-II aminoacyl-tRNA synthetase family. Phe-tRNA synthetase alpha subunit type 1 subfamily. Tetramer of two alpha and two beta subunits. The cofactor is Mg(2+).

It localises to the cytoplasm. It carries out the reaction tRNA(Phe) + L-phenylalanine + ATP = L-phenylalanyl-tRNA(Phe) + AMP + diphosphate + H(+). The protein is Phenylalanine--tRNA ligase alpha subunit of Desulforudis audaxviator (strain MP104C).